Consider the following 425-residue polypeptide: SWI/SNF and RSC complexes subunit ssr3 (425 aa).

Polar residues predominate over residues 1–16 (MSNNSRLPENGVQSGN). Positions 1 to 23 (MSNNSRLPENGVQSGNGEDAELK) are disordered. The 78-residue stretch at 201-278 (EHPERYKLSK…PELMNRFLEP (78 aa)) folds into the SWIB/MDM2 domain.

The protein belongs to the SMARCD family. In terms of assembly, component of the RSC complex composed of at least arp9, arp42, rsc1, rsc4, rsc7, rsc9, rsc58, sfh1, snf21, ssr1, ssr2, ssr3 and ssr4. The complex interacts with histone and histone variant components of centromeric chromatin. Component of the SWI/SNF global transcription activator complex composed of at least arp9, arp42, snf5, snf22, snf30, sbf59, sol1, ssr1, ssr2, ssr3, ssr4 and tfg3.

The protein resides in the cytoplasm. It localises to the nucleus. In terms of biological role, component of the chromatin structure remodeling complex (RSC), which is involved in transcription regulation and nucleosome positioning. Controls particularly membrane and organelle development genes. Part of the SWI/SNF complex, an ATP-dependent chromatin remodeling complex, required for the positive and negative regulation of gene expression of a large number of genes. It changes chromatin structure by altering DNA-histone contacts within a nucleosome, leading eventually to a change in nucleosome position, thus facilitating or repressing binding of gene-specific transcription factors. This Schizosaccharomyces pombe (strain 972 / ATCC 24843) (Fission yeast) protein is SWI/SNF and RSC complexes subunit ssr3 (ssr3).